The chain runs to 390 residues: Curcumin synthase 3 (390 aa).

Residue C164 is part of the active site.

Belongs to the thiolase-like superfamily. Chalcone/stilbene synthases family. Homodimer.

It catalyses the reaction (E)-feruloylacetyl-CoA + (E)-feruloyl-CoA + H2O = curcumin + CO2 + 2 CoA. It carries out the reaction (E)-feruloylacetyl-CoA + (E)-4-coumaroyl-CoA + H2O = demethoxycurcumin + CO2 + 2 CoA. The catalysed reaction is (4-coumaroyl)acetyl-CoA + 4-coumaroyl-CoA + H2O = bisdemethoxycurcumin + CO2 + 2 CoA. The protein operates within secondary metabolite biosynthesis; flavonoid biosynthesis. Its function is as follows. Catalyzes the synthesis of curcumin by condensing feruloyl-CoA with a diketide-CoA in the curcuminoid biosynthesis. Also acts as a demethoxycurcumin synthase by accepting 4-coumaroyl-CoA as a starter substrate instead of feruloyl-CoA. The polypeptide is Curcumin synthase 3 (CURS3) (Curcuma longa (Turmeric)).